Reading from the N-terminus, the 508-residue chain is Photosystem II CP47 reaction center protein (508 aa).

6 consecutive transmembrane segments (helical) span residues 21 to 36 (AVHI…WAGS), 101 to 115 (IVFS…IWHW), 140 to 156 (GIHL…FGAF), 203 to 218 (IAAG…FHLS), 237 to 252 (VLSS…AFIV), and 457 to 472 (TFAL…HGAR).

It belongs to the PsbB/PsbC family. PsbB subfamily. In terms of assembly, PSII is composed of 1 copy each of membrane proteins PsbA, PsbB, PsbC, PsbD, PsbE, PsbF, PsbH, PsbI, PsbJ, PsbK, PsbL, PsbM, PsbT, PsbX, PsbY, PsbZ, Psb30/Ycf12, at least 3 peripheral proteins of the oxygen-evolving complex and a large number of cofactors. It forms dimeric complexes. Requires Binds multiple chlorophylls. PSII binds additional chlorophylls, carotenoids and specific lipids. as cofactor.

Its subcellular location is the plastid. The protein localises to the chloroplast thylakoid membrane. One of the components of the core complex of photosystem II (PSII). It binds chlorophyll and helps catalyze the primary light-induced photochemical processes of PSII. PSII is a light-driven water:plastoquinone oxidoreductase, using light energy to abstract electrons from H(2)O, generating O(2) and a proton gradient subsequently used for ATP formation. The protein is Photosystem II CP47 reaction center protein of Cryptomeria japonica (Japanese cedar).